A 321-amino-acid polypeptide reads, in one-letter code: Glucokinase (321 aa).

Residue 8-13 (GDVGGT) participates in ATP binding.

This sequence belongs to the bacterial glucokinase family.

The protein resides in the cytoplasm. The enzyme catalyses D-glucose + ATP = D-glucose 6-phosphate + ADP + H(+). The protein is Glucokinase of Salmonella heidelberg (strain SL476).